Reading from the N-terminus, the 123-residue chain is Ribosome-binding factor A (123 aa).

It belongs to the RbfA family. As to quaternary structure, monomer. Binds 30S ribosomal subunits, but not 50S ribosomal subunits or 70S ribosomes.

Its subcellular location is the cytoplasm. Functionally, one of several proteins that assist in the late maturation steps of the functional core of the 30S ribosomal subunit. Associates with free 30S ribosomal subunits (but not with 30S subunits that are part of 70S ribosomes or polysomes). Required for efficient processing of 16S rRNA. May interact with the 5'-terminal helix region of 16S rRNA. The sequence is that of Ribosome-binding factor A from Neisseria gonorrhoeae (strain ATCC 700825 / FA 1090).